Consider the following 553-residue polypeptide: CTP synthase (553 aa).

Residues 1–277 form an amidoligase domain region; that stretch reads MPTEPETDYD…DQYVMEELDI (277 aa). Ser-26 contacts CTP. Position 26 (Ser-26) interacts with UTP. ATP is bound by residues 27 to 32 and Asp-84; that span reads GLGKGI. Positions 84 and 152 each coordinate Mg(2+). Residues 159 to 161, 198 to 203, and Lys-234 contribute to the CTP site; these read DIE and KTKPTQ. Residues 198-203 and Lys-234 contribute to the UTP site; that span reads KTKPTQ. An ATP-binding site is contributed by Val-252. The 238-residue stretch at 307–544 folds into the Glutamine amidotransferase type-1 domain; the sequence is LVGKYDLEDA…LEAVLGDDPH (238 aa). Gly-364 lines the L-glutamine pocket. Cys-391 serves as the catalytic Nucleophile; for glutamine hydrolysis. Residues 392–395, Glu-415, and Arg-472 contribute to the L-glutamine site; that span reads LGFQ. Active-site residues include His-517 and Glu-519.

It belongs to the CTP synthase family. Homotetramer.

It is found in the cytoplasm. It carries out the reaction UTP + L-glutamine + ATP + H2O = CTP + L-glutamate + ADP + phosphate + 2 H(+). The catalysed reaction is L-glutamine + H2O = L-glutamate + NH4(+). It catalyses the reaction UTP + NH4(+) + ATP = CTP + ADP + phosphate + 2 H(+). Its pathway is pyrimidine metabolism; CTP biosynthesis via de novo pathway; CTP from UDP: step 2/2. Its activity is regulated as follows. Allosterically activated by GTP, when glutamine is the substrate; GTP has no effect on the reaction when ammonia is the substrate. The allosteric effector GTP functions by stabilizing the protein conformation that binds the tetrahedral intermediate(s) formed during glutamine hydrolysis. Inhibited by the product CTP, via allosteric rather than competitive inhibition. Inhibited by 6-diazo-5-oxo-l-norleucine (DON). In terms of biological role, catalyzes the ATP-dependent amination of UTP to CTP with either L-glutamine or ammonia as the source of nitrogen. Regulates intracellular CTP levels through interactions with the four ribonucleotide triphosphates. The polypeptide is CTP synthase (Haloarcula hispanica (strain ATCC 33960 / DSM 4426 / JCM 8911 / NBRC 102182 / NCIMB 2187 / VKM B-1755)).